Here is a 557-residue protein sequence, read N- to C-terminus: Dihydroxy-acid dehydratase (557 aa).

Position 50 (Cys50) interacts with [2Fe-2S] cluster. Asp82 provides a ligand contact to Mg(2+). A [2Fe-2S] cluster-binding site is contributed by Cys123. 2 residues coordinate Mg(2+): Asp124 and Lys125. An N6-carboxylysine modification is found at Lys125. A [2Fe-2S] cluster-binding site is contributed by Cys195. A Mg(2+)-binding site is contributed by Glu447. Ser473 acts as the Proton acceptor in catalysis.

Belongs to the IlvD/Edd family. As to quaternary structure, homodimer. Requires [2Fe-2S] cluster as cofactor. The cofactor is Mg(2+).

The catalysed reaction is (2R)-2,3-dihydroxy-3-methylbutanoate = 3-methyl-2-oxobutanoate + H2O. It catalyses the reaction (2R,3R)-2,3-dihydroxy-3-methylpentanoate = (S)-3-methyl-2-oxopentanoate + H2O. Its pathway is amino-acid biosynthesis; L-isoleucine biosynthesis; L-isoleucine from 2-oxobutanoate: step 3/4. It functions in the pathway amino-acid biosynthesis; L-valine biosynthesis; L-valine from pyruvate: step 3/4. Functionally, functions in the biosynthesis of branched-chain amino acids. Catalyzes the dehydration of (2R,3R)-2,3-dihydroxy-3-methylpentanoate (2,3-dihydroxy-3-methylvalerate) into 2-oxo-3-methylpentanoate (2-oxo-3-methylvalerate) and of (2R)-2,3-dihydroxy-3-methylbutanoate (2,3-dihydroxyisovalerate) into 2-oxo-3-methylbutanoate (2-oxoisovalerate), the penultimate precursor to L-isoleucine and L-valine, respectively. This chain is Dihydroxy-acid dehydratase, found in Herminiimonas arsenicoxydans.